Here is a 225-residue protein sequence, read N- to C-terminus: ATP-dependent Clp protease proteolytic subunit (225 aa).

The active-site Nucleophile is the Ser123. Residue His148 is part of the active site.

The protein belongs to the peptidase S14 family. As to quaternary structure, fourteen ClpP subunits assemble into 2 heptameric rings which stack back to back to give a disk-like structure with a central cavity, resembling the structure of eukaryotic proteasomes.

The protein localises to the cytoplasm. It carries out the reaction Hydrolysis of proteins to small peptides in the presence of ATP and magnesium. alpha-casein is the usual test substrate. In the absence of ATP, only oligopeptides shorter than five residues are hydrolyzed (such as succinyl-Leu-Tyr-|-NHMec, and Leu-Tyr-Leu-|-Tyr-Trp, in which cleavage of the -Tyr-|-Leu- and -Tyr-|-Trp bonds also occurs).. In terms of biological role, cleaves peptides in various proteins in a process that requires ATP hydrolysis. Has a chymotrypsin-like activity. Plays a major role in the degradation of misfolded proteins. This chain is ATP-dependent Clp protease proteolytic subunit, found in Chlorobium luteolum (strain DSM 273 / BCRC 81028 / 2530) (Pelodictyon luteolum).